A 716-amino-acid chain; its full sequence is Pyruvate/proton symporter BtsT (716 aa).

The Cytoplasmic portion of the chain corresponds to 1 to 5 (MDTKK). Residues 6–26 (IFKHIPWVILGIIGAFCLAVV) form a helical membrane-spanning segment. Topologically, residues 27 to 30 (ALRR) are periplasmic. A helical transmembrane segment spans residues 31-51 (GEHISALWIVVASVSVYLVAY). Residues 52–88 (RYYSLYIAQKVMKLDPTRATPAVINNDGLNYVPTNRY) lie on the Cytoplasmic side of the membrane. A helical transmembrane segment spans residues 89–109 (VLFGHHFAAIAGAGPLVGPVL). The Periplasmic portion of the chain corresponds to 110–119 (AAQMGYLPGT). The helical transmembrane segment at 120–140 (LWLLAGVVLAGAVQDFMVLFI) threads the bilayer. Over 141-163 (SSRRNGASLGEMIKEEMGPVPGT) the chain is Cytoplasmic. A helical membrane pass occupies residues 164–184 (IALFGCFLIMIIILAVLALIV). Residues 185–191 (VKALAES) lie on the Periplasmic side of the membrane. The chain crosses the membrane as a helical span at residues 192-212 (PWGVFTVCSTVPIALFMGIYM). Residues 213 to 222 (RFIRPGRVGE) are Cytoplasmic-facing. The helical transmembrane segment at 223-243 (VSVIGIVLLVASIYFGGVIAH) threads the bilayer. Residues 244–257 (DPYWGPALTFKDTT) are Periplasmic-facing. Residues 258–278 (ITFALIGYAFVSALLPVWLIL) traverse the membrane as a helical segment. Over 279–282 (APRD) the chain is Cytoplasmic. The chain crosses the membrane as a helical span at residues 283-303 (YLATFLKIGVIVGLALGIVVL). Over 304 to 326 (NPELKMPAMTQYIDGTGPLWKGA) the chain is Periplasmic. A helical membrane pass occupies residues 327–347 (LFPFLFITIACGAVSGFHALI). The Cytoplasmic segment spans residues 348–374 (SSGTTPKLLANETDARFIGYGAMLMES). Residues 375–395 (FVAIMALVAASIIEPGLYFAM) form a helical membrane-spanning segment. Residues 396 to 484 (NTPPAGLGIT…HVFHKVLPMA (89 aa)) are Periplasmic-facing. A helical transmembrane segment spans residues 485-505 (DMGFWYHFGILFEALFILTAL). Over 506 to 531 (DAGTRSGRFMLQDLLGNFIPFLKKTD) the chain is Cytoplasmic. Residues 532-552 (SLVAGIIGTAGCVGLWGYLLY) form a helical membrane-spanning segment. Residues 553–568 (QGVVDPLGGVKSLWPL) lie on the Periplasmic side of the membrane. A helical membrane pass occupies residues 569–589 (FGISNQMLAAVALVLGTVVLI). The Cytoplasmic segment spans residues 590-596 (KMKRTQY). Residues 597–617 (IWVTVVPAVWLLICTTWALGL) traverse the membrane as a helical segment. The Periplasmic segment spans residues 618-668 (KLFSTNPQMEGFFYMASQYKEKIANGTDLTAQQIANMNHIVVNNYTNAGLS). Residues 669-689 (ILFLIVVYSIIFYGFKTWLAV) form a helical membrane-spanning segment. Residues 690-716 (RNSDKRTDKETPYVPIPEGGVKISSHH) are Cytoplasmic-facing. The segment at 696-716 (TDKETPYVPIPEGGVKISSHH) is disordered.

This sequence belongs to the peptide transporter carbon starvation (CstA) (TC 2.A.114) family. Interacts with BtsS and YpdA.

It is found in the cell inner membrane. The catalysed reaction is pyruvate(out) + H(+)(out) = pyruvate(in) + H(+)(in). Its activity is regulated as follows. Transport is inhibited by the protonophores 2,4-dinitrophenol (DNP) and carbonyl cyanide m-chlorophenyl hydrazone (CCCP), but not by ionophores such as valinomycin, nonactin and nigericin. Its function is as follows. Transports pyruvate with a high affinity and specificity. The process is driven by the proton motive force. Under nutrient limiting conditions, mediates the uptake of pyruvate, thus enabling it to be used as a carbon source for the growth and survival. Part of a nutrient-sensing regulatory network composed of the two-component regulatory systems BtsS/BtsR and YpdA/YpdB, and their respective target proteins, BtsT and YhjX. The sequence is that of Pyruvate/proton symporter BtsT from Escherichia coli (strain K12).